A 671-amino-acid chain; its full sequence is cGMP-dependent protein kinase 1 (671 aa).

Serine 2 bears the N-acetylserine mark. A coiled-coil region spans residues 2–59 (SELEEDFAKILMLKEERIKELEKRLSEKEEEIQELKRKLHKCQSVLPVPSTHIGPRTT). The tract at residues 2-102 (SELEEDFAKI…LIKEAILDND (101 aa)) is required for dimerization. The segment at 9-44 (AKILMLKEERIKELEKRLSEKEEEIQELKRKLHKCQ) is leucine-zipper. An autoinhibitory domain region spans residues 50–75 (PSTHIGPRTTRAQGISAEPQTYRSFH). Threonine 59 carries the post-translational modification Phosphothreonine; by autocatalysis. The interval 103-220 (FMKNLELSQI…EYMEFLKSVP (118 aa)) is cGMP-binding, high affinity. Residues 167–170 (GELA), 177–178 (RT), arginine 282, 291–294 (GEKA), 301–302 (RT), and tyrosine 336 contribute to the 3',5'-cyclic GMP site. The segment at 221-341 (TFQSLPEEIL…SNKAYEDAEA (121 aa)) is cGMP-binding, low affinity. The 260-residue stretch at 360-619 (FNIIDTLGVG…VKDIQKHKWF (260 aa)) folds into the Protein kinase domain. ATP-binding positions include 366 to 374 (LGVGGFGRV) and lysine 390. The active-site Proton acceptor is the aspartate 484. Phosphothreonine is present on threonine 515. One can recognise an AGC-kinase C-terminal domain in the interval 620–671 (EGFNWEGLRKGTLTPPIIPSVASPTDTSNFDGFPEDNDEPPPDDNSGWDIDF). Positions 635 to 671 (PIIPSVASPTDTSNFDGFPEDNDEPPPDDNSGWDIDF) are disordered. Acidic residues predominate over residues 652–661 (FPEDNDEPPP).

The protein belongs to the protein kinase superfamily. AGC Ser/Thr protein kinase family. cGMP subfamily. As to quaternary structure, isoform alpha: parallel homodimer or heterodimer and also heterotetramer. Interacts directly with PPP1R12A. Non-covalent dimer of dimer of PRKG1-PRKG1 and PPP1R12A-PPP1R12A. This interaction targets PRKG1 to stress fibers to mediate smooth muscle cell relaxation and vasodilation in responses to rises in cGMP. Isoform beta: antiparallel homodimer. Part of cGMP kinase signaling complex at least composed of ACTA2/alpha-actin, CNN1/calponin H1, PLN/phospholamban, PRKG1 and ITPR1. Interacts with IRAG1. Forms a stable complex with ITPR1, IRAG1, and isoform beta of PRKG1. Interacts with TRPC7 (via ankyrin repeat domain). Isoform alpha interacts with RGS2. Interacts with GTF2I. Post-translationally, autophosphorylation increases kinase activity. 65 kDa monomer is produced by proteolytic cleavage.

The protein localises to the cytoplasm. It carries out the reaction L-seryl-[protein] + ATP = O-phospho-L-seryl-[protein] + ADP + H(+). It catalyses the reaction L-threonyl-[protein] + ATP = O-phospho-L-threonyl-[protein] + ADP + H(+). Its activity is regulated as follows. In the absence of cGMP, PRKG1 activity is suppressed by autoinhibitory contacts. Its function is as follows. Serine/threonine protein kinase that acts as a key mediator of the nitric oxide (NO)/cGMP signaling pathway. GMP binding activates PRKG1, which phosphorylates serines and threonines on many cellular proteins. Numerous protein targets for PRKG1 phosphorylation are implicated in modulating cellular calcium, but the contribution of each of these targets may vary substantially among cell types. Proteins that are phosphorylated by PRKG1 regulate platelet activation and adhesion, smooth muscle contraction, cardiac function, gene expression, feedback of the NO-signaling pathway, and other processes involved in several aspects of the CNS like axon guidance, hippocampal and cerebellar learning, circadian rhythm and nociception. Smooth muscle relaxation is mediated through lowering of intracellular free calcium, by desensitization of contractile proteins to calcium, and by decrease in the contractile state of smooth muscle or in platelet activation. Regulates intracellular calcium levels via several pathways: phosphorylates IRAG1 and inhibits IP3-induced Ca(2+) release from intracellular stores, phosphorylation of KCNMA1 (BKCa) channels decreases intracellular Ca(2+) levels, which leads to increased opening of this channel. PRKG1 phosphorylates the canonical transient receptor potential channel (TRPC) family which inactivates the associated inward calcium current. Another mode of action of NO/cGMP/PKGI signaling involves PKGI-mediated inactivation of the Ras homolog gene family member A (RhoA). Phosphorylation of RHOA by PRKG1 blocks the action of this protein in myriad processes: regulation of RHOA translocation; decreasing contraction; controlling vesicle trafficking, reduction of myosin light chain phosphorylation resulting in vasorelaxation. Activation of PRKG1 by NO signaling also alters gene expression in a number of tissues. In smooth muscle cells, increased cGMP and PRKG1 activity influence expression of smooth muscle-specific contractile proteins, levels of proteins in the NO/cGMP signaling pathway, down-regulation of the matrix proteins osteopontin and thrombospondin-1 to limit smooth muscle cell migration and phenotype. Regulates vasodilator-stimulated phosphoprotein (VASP) functions in platelets and smooth muscle. This chain is cGMP-dependent protein kinase 1 (PRKG1), found in Oryctolagus cuniculus (Rabbit).